Reading from the N-terminus, the 252-residue chain is MSQVSICLLSEAGADPGALSILAERWGLVSDEQSIMALVLTPERLELRKRDEPKLGGIYVDFVAGTLAHRRKFGGGRGEAVAKAVGIKKGYLPRVVDATAGLGRDAFVLAALGCHVQMLERNPVVAALLDDGLRRGYQDAEIGPWLRERLTLLHASSLTALAEIEPRPEVVYLDPMYPHRQKSALVKKEMRVFQSLVGADEDADGLLAPARALATKRVVVKRPDYAEPLAGIAAQAAVTTKSHRFDLYMPLL.

S-adenosyl-L-methionine-binding positions include 104 to 105 (RD), 120 to 121 (ER), 156 to 157 (SS), and Asp174.

This sequence belongs to the methyltransferase superfamily. RsmJ family.

It localises to the cytoplasm. The enzyme catalyses guanosine(1516) in 16S rRNA + S-adenosyl-L-methionine = N(2)-methylguanosine(1516) in 16S rRNA + S-adenosyl-L-homocysteine + H(+). Functionally, specifically methylates the guanosine in position 1516 of 16S rRNA. The polypeptide is Ribosomal RNA small subunit methyltransferase J (Yersinia enterocolitica serotype O:8 / biotype 1B (strain NCTC 13174 / 8081)).